The chain runs to 89 residues: Small ribosomal subunit protein uS14 (89 aa).

This sequence belongs to the universal ribosomal protein uS14 family. Part of the 30S ribosomal subunit. Contacts proteins S3 and S10.

Functionally, binds 16S rRNA, required for the assembly of 30S particles and may also be responsible for determining the conformation of the 16S rRNA at the A site. The polypeptide is Small ribosomal subunit protein uS14 (Acholeplasma laidlawii (strain PG-8A)).